Reading from the N-terminus, the 437-residue chain is UDP-N-acetylmuramate--L-alanine ligase (437 aa).

114–120 (GTHGKTS) provides a ligand contact to ATP.

It belongs to the MurCDEF family.

It is found in the cytoplasm. It catalyses the reaction UDP-N-acetyl-alpha-D-muramate + L-alanine + ATP = UDP-N-acetyl-alpha-D-muramoyl-L-alanine + ADP + phosphate + H(+). It functions in the pathway cell wall biogenesis; peptidoglycan biosynthesis. Functionally, cell wall formation. This Lactobacillus acidophilus (strain ATCC 700396 / NCK56 / N2 / NCFM) protein is UDP-N-acetylmuramate--L-alanine ligase.